Here is a 625-residue protein sequence, read N- to C-terminus: tRNA uridine 5-carboxymethylaminomethyl modification enzyme MnmG (625 aa).

FAD is bound by residues 11–16, valine 123, and serine 178; that span reads GAGHAG. 271-285 provides a ligand contact to NAD(+); it reads GPRYCPSIETKIVTF. Position 368 (glutamine 368) interacts with FAD.

This sequence belongs to the MnmG family. As to quaternary structure, homodimer. Heterotetramer of two MnmE and two MnmG subunits. The cofactor is FAD.

It is found in the cytoplasm. Its function is as follows. NAD-binding protein involved in the addition of a carboxymethylaminomethyl (cmnm) group at the wobble position (U34) of certain tRNAs, forming tRNA-cmnm(5)s(2)U34. The sequence is that of tRNA uridine 5-carboxymethylaminomethyl modification enzyme MnmG from Bacteroides fragilis (strain ATCC 25285 / DSM 2151 / CCUG 4856 / JCM 11019 / LMG 10263 / NCTC 9343 / Onslow / VPI 2553 / EN-2).